A 407-amino-acid chain; its full sequence is Peptidase T (407 aa).

Residue H82 coordinates Zn(2+). D84 is an active-site residue. D143 is a binding site for Zn(2+). E177 serves as the catalytic Proton acceptor. Positions 178, 200, and 382 each coordinate Zn(2+).

It belongs to the peptidase M20B family. Requires Zn(2+) as cofactor.

It localises to the cytoplasm. The enzyme catalyses Release of the N-terminal residue from a tripeptide.. In terms of biological role, cleaves the N-terminal amino acid of tripeptides. In Streptococcus pyogenes serotype M28 (strain MGAS6180), this protein is Peptidase T.